The primary structure comprises 56 residues: Large ribosomal subunit protein bL32 (56 aa).

Residues 1–26 (MAVQQNKKSRSKRGMRRSHDALSTAQ) form a disordered region. Over residues 7–16 (KKSRSKRGMR) the composition is skewed to basic residues.

Belongs to the bacterial ribosomal protein bL32 family.

This Shewanella baltica (strain OS155 / ATCC BAA-1091) protein is Large ribosomal subunit protein bL32.